The following is a 124-amino-acid chain: Small ribosomal subunit protein uS12 (124 aa).

Asp-89 is subject to 3-methylthioaspartic acid.

It belongs to the universal ribosomal protein uS12 family. As to quaternary structure, part of the 30S ribosomal subunit. Contacts proteins S8 and S17. May interact with IF1 in the 30S initiation complex.

With S4 and S5 plays an important role in translational accuracy. Its function is as follows. Interacts with and stabilizes bases of the 16S rRNA that are involved in tRNA selection in the A site and with the mRNA backbone. Located at the interface of the 30S and 50S subunits, it traverses the body of the 30S subunit contacting proteins on the other side and probably holding the rRNA structure together. The combined cluster of proteins S8, S12 and S17 appears to hold together the shoulder and platform of the 30S subunit. This Tolumonas auensis (strain DSM 9187 / NBRC 110442 / TA 4) protein is Small ribosomal subunit protein uS12.